We begin with the raw amino-acid sequence, 155 residues long: Protein FAM162B (155 aa).

Residues Val-95 to Val-114 form a helical membrane-spanning segment.

The protein belongs to the UPF0389 family.

It localises to the membrane. The polypeptide is Protein FAM162B (fam162b) (Danio rerio (Zebrafish)).